The sequence spans 230 residues: V-type proton ATPase subunit E1 (230 aa).

Met-1 is modified (N-acetylmethionine). Positions 8–67 (RQIQQMVRFIRQEAEEKANEISVSAEEEFNIEKLQLVEAEKKKIRQDYEKKEKQADVRKK) form a coiled coil. Ser-178 is modified (phosphoserine).

The protein belongs to the V-ATPase E subunit family. V-ATPase is a heteromultimeric enzyme composed of a peripheral catalytic V1 complex (components A to H) attached to an integral membrane V0 proton pore complex (components: a, c, c'', d and e).

Its subcellular location is the vacuole membrane. Its function is as follows. Subunit of the peripheral V1 complex of vacuolar ATPase essential for assembly or catalytic function. V-ATPase is responsible for acidifying a variety of intracellular compartments in eukaryotic cells. Required for Golgi organization and vacuole function in embryogenesis. In Arabidopsis thaliana (Mouse-ear cress), this protein is V-type proton ATPase subunit E1 (VHA-E1).